The primary structure comprises 315 residues: DNA-directed RNA polymerase subunit alpha (315 aa).

Positions 1–228 are alpha N-terminal domain (alpha-NTD); that stretch reads MIEIEKPKVD…EHLNLFIDLT (228 aa). The alpha C-terminal domain (alpha-CTD) stretch occupies residues 245-315; that stretch reads KEKVLEMTIE…LGLGLKPSEE (71 aa).

The protein belongs to the RNA polymerase alpha chain family. In terms of assembly, homodimer. The RNAP catalytic core consists of 2 alpha, 1 beta, 1 beta' and 1 omega subunit. When a sigma factor is associated with the core the holoenzyme is formed, which can initiate transcription.

The catalysed reaction is RNA(n) + a ribonucleoside 5'-triphosphate = RNA(n+1) + diphosphate. Its function is as follows. DNA-dependent RNA polymerase catalyzes the transcription of DNA into RNA using the four ribonucleoside triphosphates as substrates. The protein is DNA-directed RNA polymerase subunit alpha of Clostridioides difficile (strain 630) (Peptoclostridium difficile).